A 183-amino-acid chain; its full sequence is Segregation and condensation protein B (183 aa).

The protein belongs to the ScpB family. As to quaternary structure, homodimer. Homodimerization may be required to stabilize the binding of ScpA to the Smc head domains. Component of a cohesin-like complex composed of ScpA, ScpB and the Smc homodimer, in which ScpA and ScpB bind to the head domain of Smc. The presence of the three proteins is required for the association of the complex with DNA.

The protein resides in the cytoplasm. In terms of biological role, participates in chromosomal partition during cell division. May act via the formation of a condensin-like complex containing Smc and ScpA that pull DNA away from mid-cell into both cell halves. The polypeptide is Segregation and condensation protein B (Streptococcus pyogenes serotype M12 (strain MGAS2096)).